We begin with the raw amino-acid sequence, 185 residues long: Peptidyl-tRNA hydrolase (185 aa).

Residue Y14 coordinates tRNA. Residue H19 is the Proton acceptor of the active site. TRNA is bound by residues F64, N66, and N112.

This sequence belongs to the PTH family. In terms of assembly, monomer.

It is found in the cytoplasm. The catalysed reaction is an N-acyl-L-alpha-aminoacyl-tRNA + H2O = an N-acyl-L-amino acid + a tRNA + H(+). Functionally, hydrolyzes ribosome-free peptidyl-tRNAs (with 1 or more amino acids incorporated), which drop off the ribosome during protein synthesis, or as a result of ribosome stalling. In terms of biological role, catalyzes the release of premature peptidyl moieties from peptidyl-tRNA molecules trapped in stalled 50S ribosomal subunits, and thus maintains levels of free tRNAs and 50S ribosomes. The sequence is that of Peptidyl-tRNA hydrolase from Lacticaseibacillus casei (strain BL23) (Lactobacillus casei).